Reading from the N-terminus, the 445-residue chain is C4-dicarboxylate transport protein (445 aa).

8 helical membrane-spanning segments follow: residues 17–37 (FYQI…LLGY), 56–76 (LVKM…IAAM), 91–111 (VYFL…SHIV), 157–177 (FVGG…LSLA), 200–220 (LVAI…AFTI), 233–253 (MLVG…LGMV), 319–339 (IYMT…LSLG), and 367–387 (AATL…ILGV).

Belongs to the dicarboxylate/amino acid:cation symporter (DAACS) (TC 2.A.23) family.

It is found in the cell inner membrane. Functionally, responsible for the transport of dicarboxylates such as succinate, fumarate, and malate from the periplasm across the membrane. In Bordetella avium (strain 197N), this protein is C4-dicarboxylate transport protein.